The following is a 237-amino-acid chain: DNA repair protein RecO (237 aa).

Belongs to the RecO family.

Involved in DNA repair and RecF pathway recombination. The sequence is that of DNA repair protein RecO from Rickettsia peacockii (strain Rustic).